The following is a 1021-amino-acid chain: Immunoglobulin superfamily member 2 (1021 aa).

A signal peptide spans 1 to 20; it reads MAGISYVASFFLLLTKLSIG. Topologically, residues 21–954 are extracellular; sequence QREVTVQKGP…LPSRICSSAP (934 aa). Ig-like C2-type domains follow at residues 22-139, 144-265, 279-389, 408-525, 541-651, 656-794, and 808-925; these read REVT…AKTN, PDTL…WMFI, PAVK…RTGS, PAAR…RDLS, LQVS…NSLY, PRAS…WHKL, and PTGS…KWIN. Cystine bridges form between C43–C121 and C168–C249. N-linked (GlcNAc...) asparagine glycosylation is present at N44. Positions 253–255 match the EWI motif motif; the sequence is EWI. Disulfide bonds link C304–C377, C434–C511, C562–C640, C697–C778, and C834–C909. N-linked (GlcNAc...) asparagine glycosylation occurs at N322. A helical membrane pass occupies residues 955-975; sequence LLYFLFICPFVLLLLLLISLL. Topologically, residues 976-1021 are cytoplasmic; that stretch reads CLYWKARKLSTLRSNTRKEKALWVDLKEAGGVTTNRREDEEEDEGN.

Post-translationally, N-glycosylated. As to expression, expressed in lung, thymus and small intestine. Detected in cutaneous dendritic cells, activated T-cells, monocytes and granulocytes as well as with epithelial cells with dendritic morphology. Expressed in some leukemic cells, the CD4(+) CD56(+) blastic tumor cells, as well as in Langerhans cells from LCH (Langerhans cell histiocytosis) patients.

The protein resides in the membrane. Its function is as follows. Plays a role as inhibitor of T-cells proliferation induced by CD3. Inhibits expression of IL2RA on activated T-cells and secretion of IL2. Inhibits tyrosine kinases that are required for IL2 production and cellular proliferation. Inhibits phospholipase C-gamma-1/PLCG1 phosphorylation and subsequent CD3-induced changes in intracellular free calcium. Prevents nuclear translocation of nuclear factor of activated T-cell to the nucleus. Plays a role in the inhibition of T-cell proliferation via IL10 secretion by cutaneous dendritic cells. May be a marker of CD4(+) CD56(+) leukemic tumor cells. This Homo sapiens (Human) protein is Immunoglobulin superfamily member 2 (CD101).